A 234-amino-acid chain; its full sequence is Probable cyclic nucleotide phosphodiesterase Rmag_0669 (234 aa).

Residues Asp-11, His-13, Asp-49, Asn-79, His-145, His-184, and His-186 each coordinate Fe cation. AMP is bound by residues His-13, Asp-49, and 79-80 (NH). Position 186 (His-186) interacts with AMP.

This sequence belongs to the cyclic nucleotide phosphodiesterase class-III family. Fe(2+) serves as cofactor.

This chain is Probable cyclic nucleotide phosphodiesterase Rmag_0669, found in Ruthia magnifica subsp. Calyptogena magnifica.